Reading from the N-terminus, the 197-residue chain is C-type lectin domain family 3 member A (197 aa).

Positions 1 to 24 (MAKNGLVIYILVITLLLDQTSCHA) are cleaved as a signal peptide. Disulfide bonds link Cys68-Cys78, Cys95-Cys191, and Cys167-Cys183. A C-type lectin domain is found at 74 to 192 (FHKKCYLAAE…CHSSKRYICE (119 aa)).

It is found in the secreted. Promotes cell adhesion to laminin and fibronectin. The protein is C-type lectin domain family 3 member A (CLEC3A) of Bos taurus (Bovine).